A 483-amino-acid chain; its full sequence is Protein nucleotidyltransferase YdiU (483 aa).

Residues Gly87, Gly89, Arg90, Lys110, Asp122, Gly123, Arg173, and Arg180 each coordinate ATP. Asp249 serves as the catalytic Proton acceptor. Mg(2+) contacts are provided by Asn250 and Asp259. Asp259 lines the ATP pocket.

The protein belongs to the SELO family. The cofactor is Mg(2+). Mn(2+) serves as cofactor.

It carries out the reaction L-seryl-[protein] + ATP = 3-O-(5'-adenylyl)-L-seryl-[protein] + diphosphate. It catalyses the reaction L-threonyl-[protein] + ATP = 3-O-(5'-adenylyl)-L-threonyl-[protein] + diphosphate. The enzyme catalyses L-tyrosyl-[protein] + ATP = O-(5'-adenylyl)-L-tyrosyl-[protein] + diphosphate. The catalysed reaction is L-histidyl-[protein] + UTP = N(tele)-(5'-uridylyl)-L-histidyl-[protein] + diphosphate. It carries out the reaction L-seryl-[protein] + UTP = O-(5'-uridylyl)-L-seryl-[protein] + diphosphate. It catalyses the reaction L-tyrosyl-[protein] + UTP = O-(5'-uridylyl)-L-tyrosyl-[protein] + diphosphate. Functionally, nucleotidyltransferase involved in the post-translational modification of proteins. It can catalyze the addition of adenosine monophosphate (AMP) or uridine monophosphate (UMP) to a protein, resulting in modifications known as AMPylation and UMPylation. This chain is Protein nucleotidyltransferase YdiU, found in Pelagibacter ubique (strain HTCC1062).